Here is a 166-residue protein sequence, read N- to C-terminus: Endoribonuclease YbeY (166 aa).

Residues His132, His136, and His142 each coordinate Zn(2+).

The protein belongs to the endoribonuclease YbeY family. The cofactor is Zn(2+).

The protein localises to the cytoplasm. In terms of biological role, single strand-specific metallo-endoribonuclease involved in late-stage 70S ribosome quality control and in maturation of the 3' terminus of the 16S rRNA. This is Endoribonuclease YbeY from Clostridium botulinum (strain Kyoto / Type A2).